Consider the following 463-residue polypeptide: Thiamine-repressible acid phosphatase SPBC21H7.03c (463 aa).

The first 18 residues, 1 to 18 (MQLCIISLWFLAAFIVNA), serve as a signal peptide directing secretion. H69 serves as the catalytic Nucleophile. Residues N98, N104, N221, and N324 are each glycosylated (N-linked (GlcNAc...) asparagine). D341 (proton donor) is an active-site residue. Residues N439 and N458 are each glycosylated (N-linked (GlcNAc...) asparagine).

Belongs to the histidine acid phosphatase family.

Its subcellular location is the secreted. It is found in the cell wall. It carries out the reaction a phosphate monoester + H2O = an alcohol + phosphate. Its function is as follows. May dephosphorylate thiamine phosphates. In Schizosaccharomyces pombe (strain 972 / ATCC 24843) (Fission yeast), this protein is Thiamine-repressible acid phosphatase SPBC21H7.03c.